The primary structure comprises 441 residues: Methylenetetrahydrofolate--tRNA-(uracil-5-)-methyltransferase TrmFO (441 aa).

Residue 7–12 (GAGLSG) coordinates FAD.

This sequence belongs to the MnmG family. TrmFO subfamily. It depends on FAD as a cofactor.

Its subcellular location is the cytoplasm. It carries out the reaction uridine(54) in tRNA + (6R)-5,10-methylene-5,6,7,8-tetrahydrofolate + NADH + H(+) = 5-methyluridine(54) in tRNA + (6S)-5,6,7,8-tetrahydrofolate + NAD(+). The enzyme catalyses uridine(54) in tRNA + (6R)-5,10-methylene-5,6,7,8-tetrahydrofolate + NADPH + H(+) = 5-methyluridine(54) in tRNA + (6S)-5,6,7,8-tetrahydrofolate + NADP(+). In terms of biological role, catalyzes the folate-dependent formation of 5-methyl-uridine at position 54 (M-5-U54) in all tRNAs. This Pseudothermotoga lettingae (strain ATCC BAA-301 / DSM 14385 / NBRC 107922 / TMO) (Thermotoga lettingae) protein is Methylenetetrahydrofolate--tRNA-(uracil-5-)-methyltransferase TrmFO.